The following is a 567-amino-acid chain: Low-affinity glucose transporter (567 aa).

Polar residues predominate over residues 1–24; the sequence is MSNQMTDSTSAGSGTEHSVDTNTA. The tract at residues 1–36 is disordered; that stretch reads MSNQMTDSTSAGSGTEHSVDTNTALKAGSPNDLKVS. The Cytoplasmic portion of the chain corresponds to 18 to 62; it reads SVDTNTALKAGSPNDLKVSHEEDLNDLEKTAEETLQQKPAKEYIF. The chain crosses the membrane as a helical span at residues 63-83; sequence VSLCCVMVAFGGFVFGWDTGT. At 84–113 the chain is on the extracellular side; sequence ISGFVNQTDFLRRFGQEKADGSHYLSNVRT. Asn-89 carries N-linked (GlcNAc...) asparagine glycosylation. The chain crosses the membrane as a helical span at residues 114 to 134; sequence GLIVSIFNIGCAVGGIVLSNI. Residues 135–141 lie on the Cytoplasmic side of the membrane; the sequence is GDRWGRR. The helical transmembrane segment at 142-162 threads the bilayer; that stretch reads IGLITVIIIYVIGIIIQIASV. Residues 163–167 are Extracellular-facing; the sequence is DKWYQ. Residues 168 to 188 traverse the membrane as a helical segment; it reads YFIGRIISGLGVGGITVLSPM. The Cytoplasmic portion of the chain corresponds to 189-199; it reads LISETAPKHLR. A helical membrane pass occupies residues 200 to 220; it reads GTLVSCYQLMITFGIFLGYCT. Over 221 to 234 the chain is Extracellular; sequence NYGTKNYSNSVQWR. Residues 235 to 255 form a helical membrane-spanning segment; it reads VPLGLCFAWAIFMVLGMMFVP. The Cytoplasmic segment spans residues 256-334; it reads ESARFLVETD…MGIMIQSLQQ (79 aa). The helical transmembrane segment at 335-354 threads the bilayer; it reads LTGDNYFFYYGTTIFQSVGM. The Extracellular segment spans residues 355-358; it reads DDSF. Residues 359–379 form a helical membrane-spanning segment; that stretch reads ETSIVLGIVNFASTFFALYTV. Topologically, residues 380 to 386 are cytoplasmic; that stretch reads DHFGRRN. Residues 387-407 form a helical membrane-spanning segment; sequence CLLYGCVGMVACYVVYASVGV. The Extracellular portion of the chain corresponds to 408 to 429; it reads TRLWPDGPDHPDISSKGAGNCM. The chain crosses the membrane as a helical span at residues 430–450; sequence IVFACFYIFCFATTWAPIAYV. Residues 451 to 466 are Cytoplasmic-facing; sequence VISESYPLRVKGKAMA. The chain crosses the membrane as a helical span at residues 467 to 487; the sequence is IASASNWIWGFLIGFFTPFIT. Over 488 to 493 the chain is Extracellular; sequence SAIHFY. A helical membrane pass occupies residues 494–514; that stretch reads YGYVFMGCMVFAFFYVYFFVP. At 515-567 the chain is on the cytoplasmic side; sequence ETKGLTLEEVNEMYSEGVLPWKSSSWVPSSRRGAEYDVDALQHDDKPWYKAML.

Belongs to the major facilitator superfamily. Sugar transporter (TC 2.A.1.1) family.

It is found in the membrane. Its function is as follows. Low-affinity glucose transporter. In Kluyveromyces lactis (strain ATCC 8585 / CBS 2359 / DSM 70799 / NBRC 1267 / NRRL Y-1140 / WM37) (Yeast), this protein is Low-affinity glucose transporter (RAG1).